A 387-amino-acid polypeptide reads, in one-letter code: Protein adenylyltransferase VopS (387 aa).

Residues 76–77 (IT), 122–124 (LDS), 353–355 (GNG), and Arg359 contribute to the ATP site. One can recognise a Fido domain in the interval 278 to 387 (LNMDNLKELH…NAENSLHGIK (110 aa)).

It is found in the secreted. It carries out the reaction L-tyrosyl-[protein] + ATP = O-(5'-adenylyl)-L-tyrosyl-[protein] + diphosphate. The enzyme catalyses L-threonyl-[protein] + ATP = 3-O-(5'-adenylyl)-L-threonyl-[protein] + diphosphate. Its function is as follows. Adenylyltransferase involved in virulence by mediating the addition of adenosine 5'-monophosphate (AMP) to specific threonine residue of host Rho GTPases RhoA, Rac and Cdc42. The resulting AMPylation prevents the interaction of Rho GTPases with downstream effectors, thereby inhibiting actin assembly in infected cells. The protein is Protein adenylyltransferase VopS (vopS) of Vibrio parahaemolyticus serotype O3:K6 (strain RIMD 2210633).